The following is a 339-amino-acid chain: MFYKIAQKFMFQMDPELAHNLAIGSLKSTGNSPLNCFYAQNIKPAPVTMMGLTFPNPVGLAAGMDKDGECIDAFHAMGFGHIEVGTVTPRPQPGNDKPRCFRLKPAKAIINRMGFNNKGVDNLVENLKAVKTNAMVGVNIGKNKDTPVEQGKDDYLICMDKVYPYAAYIAVNISSPNTPGLRSLQYGDLLDDLLGSLKQKQKELAEKHGKYVPIALKIAPDLSSEEIEKIAEALIKSEFDAAIATNTTLTRDGVSGLLNANEAGGLSGKPLNSLSTIVIKQLADCLKGKLPIIGVGGINAAEDALDKLDAGAEMVQIFSGFIYQGPKLIKDIVEAYRIK.

FMN-binding positions include 62-66 (AGMDK) and T86. Substrate is bound at residue K66. Residue 111 to 115 (NRMGF) participates in substrate binding. The FMN site is built by N139 and N172. N172 contacts substrate. The active-site Nucleophile is S175. Residue N177 participates in substrate binding. FMN is bound by residues K217 and T245. Position 246-247 (246-247 (NT)) interacts with substrate. FMN-binding positions include G268, G297, and 318–319 (FS).

It belongs to the dihydroorotate dehydrogenase family. Type 2 subfamily. As to quaternary structure, monomer. FMN is required as a cofactor.

The protein localises to the cell membrane. It carries out the reaction (S)-dihydroorotate + a quinone = orotate + a quinol. It participates in pyrimidine metabolism; UMP biosynthesis via de novo pathway; orotate from (S)-dihydroorotate (quinone route): step 1/1. In terms of biological role, catalyzes the conversion of dihydroorotate to orotate with quinone as electron acceptor. The protein is Dihydroorotate dehydrogenase (quinone) of Shewanella halifaxensis (strain HAW-EB4).